We begin with the raw amino-acid sequence, 86 residues long: Large ribosomal subunit protein bL31B (86 aa).

This sequence belongs to the bacterial ribosomal protein bL31 family. Type B subfamily. Part of the 50S ribosomal subunit.

The chain is Large ribosomal subunit protein bL31B from Streptococcus equi subsp. zooepidemicus (strain H70).